Here is a 515-residue protein sequence, read N- to C-terminus: 1-pyrroline-5-carboxylate dehydrogenase (515 aa).

Active-site residues include glutamate 286 and cysteine 320.

The protein belongs to the aldehyde dehydrogenase family. RocA subfamily.

It catalyses the reaction L-glutamate 5-semialdehyde + NAD(+) + H2O = L-glutamate + NADH + 2 H(+). Its pathway is amino-acid degradation; L-proline degradation into L-glutamate; L-glutamate from L-proline: step 2/2. This chain is 1-pyrroline-5-carboxylate dehydrogenase, found in Bacillus anthracis (strain A0248).